We begin with the raw amino-acid sequence, 766 residues long: Cytoplasmic polyadenylation element-binding protein 3 (766 aa).

Disordered stretches follow at residues 1-35, 131-179, and 216-299; these read MSQEEVPGEIPGDIAIEKAENTVQDDVEAKNTSET, VPSR…ARRL, and PVPI…LPPR. 2 stretches are compositionally biased toward polar residues: residues 233-256 and 276-289; these read ETPTDSPAKTETSSISKSYGSDYQ and STPNRGQGLSNRDN. Positions 310 to 332 constitute an RRM domain; the sequence is IFVGGVPWDITEAALKDSFGEFG. The tract at residues 578–602 is disordered; it reads KAFSGPNRRSHLSSNSPSKPASLMS. Over residues 589–602 the composition is skewed to low complexity; that stretch reads LSSNSPSKPASLMS.

Functionally, cytoplasmic polyadenylation element binding protein that binds to and regulates the translation of specific mRNAs. This chain is Cytoplasmic polyadenylation element-binding protein 3 (cpb-3), found in Caenorhabditis remanei (Caenorhabditis vulgaris).